The primary structure comprises 319 residues: Beta-ketoacyl-[acyl-carrier-protein] synthase III (319 aa).

Residues C113 and H246 contribute to the active site. Positions 247-251 (QANLR) are ACP-binding. The active site involves N276.

The protein belongs to the thiolase-like superfamily. FabH family. As to quaternary structure, homodimer.

The protein localises to the cytoplasm. The catalysed reaction is malonyl-[ACP] + acetyl-CoA + H(+) = 3-oxobutanoyl-[ACP] + CO2 + CoA. Its pathway is lipid metabolism; fatty acid biosynthesis. Its function is as follows. Catalyzes the condensation reaction of fatty acid synthesis by the addition to an acyl acceptor of two carbons from malonyl-ACP. Catalyzes the first condensation reaction which initiates fatty acid synthesis and may therefore play a role in governing the total rate of fatty acid production. Possesses both acetoacetyl-ACP synthase and acetyl transacylase activities. Its substrate specificity determines the biosynthesis of branched-chain and/or straight-chain of fatty acids. In Chromobacterium violaceum (strain ATCC 12472 / DSM 30191 / JCM 1249 / CCUG 213 / NBRC 12614 / NCIMB 9131 / NCTC 9757 / MK), this protein is Beta-ketoacyl-[acyl-carrier-protein] synthase III.